Reading from the N-terminus, the 967-residue chain is RNA polymerase-associated protein RapA (967 aa).

The 171-residue stretch at 163–333 folds into the Helicase ATP-binding domain; that stretch reads EVGQRHAPRV…FARLRLLDPN (171 aa). 176–183 lines the ATP pocket; it reads DEVGLGKT. A DEAH box motif is present at residues 279–282; that stretch reads DEAH. The region spanning 489-643 is the Helicase C-terminal domain; the sequence is RVEWLLNYLT…TCPTGRTIYD (155 aa).

Belongs to the SNF2/RAD54 helicase family. RapA subfamily. In terms of assembly, interacts with the RNAP. Has a higher affinity for the core RNAP than for the holoenzyme. Its ATPase activity is stimulated by binding to RNAP.

In terms of biological role, transcription regulator that activates transcription by stimulating RNA polymerase (RNAP) recycling in case of stress conditions such as supercoiled DNA or high salt concentrations. Probably acts by releasing the RNAP, when it is trapped or immobilized on tightly supercoiled DNA. Does not activate transcription on linear DNA. Probably not involved in DNA repair. This is RNA polymerase-associated protein RapA from Pectobacterium carotovorum subsp. carotovorum (strain PC1).